The sequence spans 188 residues: PRA1 family protein 3 (188 aa).

Met-1 carries the post-translational modification N-acetylmethionine. The Cytoplasmic segment spans residues 1–35 (MDVNIAPLRAWDDFFPGSDRFAQPDFRDISKWNNR). 2 consecutive transmembrane segments (helical) span residues 36 to 56 (VVSN…MMIS) and 57 to 77 (VVGF…VLVF). Residues 78–93 (TGFVWAAHNKDALRRL) are Cytoplasmic-facing. The next 2 membrane-spanning stretches (helical) occupy residues 94–114 (KKRY…FLIS) and 115–135 (MFGG…LMFI). The tract at residues 103–117 (MVVMLASYFLISMFG) is required for homodimer formation and heterodimer formation with ARL6IP1. The Cytoplasmic portion of the chain corresponds to 136–188 (HASLRLRNLKNKLENKMEGIGLKRTPMGIVLDALEQQEEGINRLTDYISKVKE). The segment at 136–188 (HASLRLRNLKNKLENKMEGIGLKRTPMGIVLDALEQQEEGINRLTDYISKVKE) is targeting to endoplasmic reticulum membrane.

The protein belongs to the PRA1 family. In terms of assembly, homodimer. Heterodimer with ARL6IP1. Forms multimers. Interacts with ARL6. Interacts with prenylated RAB1A and RAB3A. Interacts with SLC1A1/EAAC1. Interacts with RTN2 (via first transmembrane domain). Does not interact with VAMP1, VAMP2 or VAMP3.

It is found in the endoplasmic reticulum membrane. The protein localises to the cell membrane. It localises to the cytoplasm. Its subcellular location is the cytoskeleton. Regulates intracellular concentrations of taurine and glutamate. Negatively modulates SLC1A1/EAAC1 glutamate transport activity by decreasing its affinity for glutamate in a PKC activity-dependent manner. Plays a role in the retention of SLC1A1/EAAC1 in the endoplasmic reticulum. In Macaca fascicularis (Crab-eating macaque), this protein is PRA1 family protein 3 (ARL6IP5).